The primary structure comprises 229 residues: Potassium/proton antiporter CemA (229 aa).

4 helical membrane-spanning segments follow: residues 7 to 27, 114 to 134, 154 to 174, and 189 to 209; these read FTPL…SLSF, ITCF…LVIL, ILLL…ELMI, and IISG…KYWI.

It belongs to the CemA family.

Its subcellular location is the plastid. It localises to the chloroplast inner membrane. The enzyme catalyses K(+)(in) + H(+)(out) = K(+)(out) + H(+)(in). Contributes to K(+)/H(+) antiport activity by supporting proton efflux to control proton extrusion and homeostasis in chloroplasts in a light-dependent manner to modulate photosynthesis. Prevents excessive induction of non-photochemical quenching (NPQ) under continuous-light conditions. Indirectly promotes efficient inorganic carbon uptake into chloroplasts. This Platanus occidentalis (Sycamore) protein is Potassium/proton antiporter CemA.